Consider the following 275-residue polypeptide: Voltage-dependent calcium channel gamma-5 subunit (275 aa).

4 helical membrane passes run 8-28 (ALTL…GIAV), 103-123 (FPLV…IGHI), 129-149 (ILAF…VVGL), and 176-196 (GWSF…GVMS).

Belongs to the PMP-22/EMP/MP20 family. CACNG subfamily. As to quaternary structure, the L-type calcium channel is composed of five subunits: alpha-1, alpha-2/delta, beta and gamma. Acts as an auxiliary subunit for AMPA-selective glutamate receptors (AMPARs). Found in a complex with GRIA1, GRIA2, GRIA3, GRIA4, CNIH2, CNIH3, CACNG2, CACNG3, CACNG4, CACNG7 and CACNG8. Interacts with GRIA1, GRIA2, GRIA3 and GRIA4.

It is found in the membrane. The protein localises to the postsynaptic density membrane. Regulates the gating properties of AMPA-selective glutamate receptors (AMPARs). Modulates their gating properties by accelerating their rates of activation, deactivation and desensitization. Displays subunit-specific AMPA receptor regulation. Shows specificity for GRIA1, GRIA4 and the long isoform of GRIA2. Thought to stabilize the calcium channel in an inactivated (closed) state. The chain is Voltage-dependent calcium channel gamma-5 subunit (CACNG5) from Homo sapiens (Human).